A 1155-amino-acid polypeptide reads, in one-letter code: MFPSVSSPRTPGPGTRRGPLVGIGPTSTPRASRRGLSLGSAVNSPVLFSPAGRRSSVSSRGTPTRIFPHHSISESVNYDVRVFGSSLPVKIMEALTMAEADEQLSVHVDEGGWACLVCTEKLLIWKIAVSPVTKLSVCKELQLPPSDFHGSADLVALSYAATSGEVHSVQAVSVMVATKEGSIRYWPSLAREDTYSDTCVDLGGEKMCRFLTAVQGGSFILSSVGSQLVRLIPESSGKIHQHVLPQGQGMLSGIGRRVSSLFGILSPTSDLMLASVLWDRGGSSFYTLTSSNISKWELDDSSEKQVHSWDVHRTLKESITDAVWGSESNYEAIKEGVNIQYLDLKQNCDGLLILAAAWHLGDSPCLVYYSVITVEDNGNQMSDAVTVEVTQYNPPFQSEDLIACRLMVPNFSSQMTYLYMENAVFVCSTGTGKFSLPQEKIVFDTQGDGILGAGSCAGVPILFSRNSGLVSVTPRENVSLLAEDLEESLTSSVGGRGSESMVFETTTKNETVAHEDKTKLLKAAFLQYCRKDLGRAQIMADELFSSHTDLDSDPELDKAVTQISVDLIDDYPASDPRWAESVPQEAPGLSNTSLIILHQLEDKMKAHCLLVDFLHQVGLFRRLSSYPIRGTPMSTRLLLCEHAEKLSAAITLKNHHSRLPDLVNSAILLALNKRECEVPNSLTPADVFFREVSQVDTICECLLEHEEQVLREVALVSQEWAEVAIDVNTVLKDMLQAATHYRLNKSSMYSQEEVLGKEPEYVPWTATSGPSGIRTAVMRQHGIILKMVYPQADSKLRNVVMEQLVALIDCFLDSYVSQLKSLEKSSDQERYSSLEVEYLQKRSELLSPLLTLGQYPWAASLAEKYCDFDILVQMCEQTDNQARLQRYMTQFADQNFSDFLFRWYLEKGKRGKLLSQPISQHGQLANFLQAHEHLSWLHEINSQELEKAHTTLLGLANMETRYFAKKKTLLGLSKLAALASDISEDRLQEKIEAMAEQERFLLHQETLPEQLLTERQLSLSAMPVLTAPQLISLYICDENRRANEYDFKKALDLLEYIDEEEDVSIDDLKLEILCRALQRDDWSGSDGKDDPIEVSKDSVFVKILQKLIKDGIQLSEYLPEVTDLLRAEQLGSLKSNSYFEFVLKANYEYYVQGQM.

M1 carries the post-translational modification N-acetylmethionine. Residues 1-36 (MFPSVSSPRTPGPGTRRGPLVGIGPTSTPRASRRGL) are disordered. S7 is modified (phosphoserine). Over residues 8 to 19 (PRTPGPGTRRGP) the composition is skewed to low complexity. The residue at position 17 (R17) is an Omega-N-methylarginine. Residue S27 is modified to Phosphoserine. The residue at position 28 (T28) is a Phosphothreonine. Residues R30 and R34 each carry the omega-N-methylarginine modification. S37, S40, S44, S49, S71, S130, S479, S488, S492, and S500 each carry phosphoserine. N6-acetyllysine is present on K786. S1132 bears the Phosphoserine mark.

The protein belongs to the nucleoporin Nup133 family. As to quaternary structure, forms part of the Nup160 subcomplex in the nuclear pore which is composed of NUP160, NUP133, NUP107 and Nup96. This complex plays a role in RNA export and in tethering Nup98 and NUP153 to the nucleus.

It is found in the nucleus. The protein resides in the nuclear pore complex. It localises to the chromosome. Its subcellular location is the centromere. The protein localises to the kinetochore. Involved in poly(A)+ RNA transport. Involved in nephrogenesis. This chain is Nuclear pore complex protein Nup133 (Nup133), found in Mus musculus (Mouse).